The primary structure comprises 124 residues: Small ribosomal subunit protein bS6 (124 aa).

The segment at 99–124 (PLPAPRVMPGSEAAQQQQAEAAASAD) is disordered. Over residues 109–124 (SEAAQQQQAEAAASAD) the composition is skewed to low complexity.

The protein belongs to the bacterial ribosomal protein bS6 family.

In terms of biological role, binds together with bS18 to 16S ribosomal RNA. This is Small ribosomal subunit protein bS6 from Synechococcus sp. (strain CC9605).